The primary structure comprises 306 residues: MEPGSMENLSIVYQSSDFLVVNKHWDLRIDSKTWRETLTLQKQLRHHFPELADPDTCYGFRFCHQLDFSTSGALCVALNKAAAGSAYKCFKERRVTKAYLALVRGHVQESQVTINYAIGRNSTEGRTHTMCIEGTHGCENPKPSLTELLVLEHGLYAGDPVSKVLLKPLTGRTHQLRVHCSALGHPIVGDLTYGQAEDQEDQPFRMMLHAFYLRIPTQAERVEACTPDPFLPALDACWSPSTCVQPLEQLIQALRTDPDPDPMSGGPRPCSPSTPQPRPGRPPPETEAQRASCLQWLSEWTLEPDN.

An N-acetylmethionine modification is found at methionine 1. Aspartate 67 is a catalytic residue. The interval 255-290 is disordered; it reads RTDPDPDPMSGGPRPCSPSTPQPRPGRPPPETEAQR. Positions 269–285 are enriched in pro residues; that stretch reads PCSPSTPQPRPGRPPPE.

Belongs to the pseudouridine synthase RluA family.

The polypeptide is RNA pseudouridylate synthase domain-containing protein 1 (Rpusd1) (Mus musculus (Mouse)).